The primary structure comprises 541 residues: Chaperonin GroEL 2 (541 aa).

ATP contacts are provided by residues 29–32 (TLGP), 86–90 (DGTTT), Gly-414, 478–480 (DAA), and Asp-494.

This sequence belongs to the chaperonin (HSP60) family. Forms a cylinder of 14 subunits composed of two heptameric rings stacked back-to-back. Interacts with the co-chaperonin GroES.

It localises to the cytoplasm. It carries out the reaction ATP + H2O + a folded polypeptide = ADP + phosphate + an unfolded polypeptide.. In terms of biological role, together with its co-chaperonin GroES, plays an essential role in assisting protein folding. The GroEL-GroES system forms a nano-cage that allows encapsulation of the non-native substrate proteins and provides a physical environment optimized to promote and accelerate protein folding. The chain is Chaperonin GroEL 2 from Frankia casuarinae (strain DSM 45818 / CECT 9043 / HFP020203 / CcI3).